The following is a 357-amino-acid chain: Molybdenum import ATP-binding protein ModC (357 aa).

The ABC transporter domain occupies 1–233 (MRLEVEARLR…PFPTSGPGRR (233 aa)). 31 to 38 (GRSGSGKT) serves as a coordination point for ATP. Residues 293–357 (GISALNVLPG…AVVKTVALDY (65 aa)) form the Mop domain.

This sequence belongs to the ABC transporter superfamily. Molybdate importer (TC 3.A.1.8) family. In terms of assembly, the complex is composed of two ATP-binding proteins (ModC), two transmembrane proteins (ModB) and a solute-binding protein (ModA).

It localises to the cell inner membrane. It catalyses the reaction molybdate(out) + ATP + H2O = molybdate(in) + ADP + phosphate + H(+). Part of the ABC transporter complex ModABC involved in molybdenum import. Responsible for energy coupling to the transport system. The polypeptide is Molybdenum import ATP-binding protein ModC (Rhizobium meliloti (strain 1021) (Ensifer meliloti)).